The sequence spans 394 residues: MKLGVVGLGQAGGKIVDALLEYDQRTNCHIVHDALTVNTATADLNALEHIPADARVLIGKSQVGGQGVGGDNELGATITTEDITEIQHVIDTISVHEIDAFLLVAALGGGTGSGALPVVGRHLKQLYTEPVYGLGILPSTNEGGLYSLNAARSLQTAVRELDNLLIFDNDAHRQANESLTGGYAAINRELATRLGVLFGAGDIDTGTANPESVVDASEIINTLKGGGVSTLGYASQSLEEEDGAEAAGLLSRFKRESSTDSAGGTNRITSLVRRATLGRLTLPVEPANVSIDRGLVIVAGPSDCLNRKGIERGRTWVEEQTGCLSIRGGDYPLPESNTVAVVVLFSGISGADRLHELRSIGSEAQTTGAERTGSSDRHLESILGDDADELDSLF.

GTP is bound by residues 10–14 (QAGGK), 110–112 (GTG), Glu-142, Asn-169, and Asn-187.

The protein belongs to the CetZ family.

Its subcellular location is the cytoplasm. In terms of biological role, involved in cell shape control. The protein is Tubulin-like protein CetZ4 of Haloferax volcanii (strain ATCC 29605 / DSM 3757 / JCM 8879 / NBRC 14742 / NCIMB 2012 / VKM B-1768 / DS2) (Halobacterium volcanii).